The sequence spans 543 residues: Heparanase (543 aa).

An N-terminal signal peptide occupies residues 1–35; it reads MLLRSKPALPPPLMLLLLGPLGPLSPGALPRPAQA. Residues 62–64 and Thr-97 contribute to the heparan sulfate group site; that span reads DAN. A propeptide spans 110–157 (linker peptide); that stretch reads STFEERSYWQSQVNQDICKYGSIPPDVEEKLRLEWPYQEQLLLREHYQ. A disulfide bond links Cys-127 and Cys-179. 158-162 contributes to the heparan sulfate group binding site; the sequence is KKFKN. N-linked (GlcNAc...) asparagine glycosylation is found at Asn-162, Asn-178, Asn-200, and Asn-217. Glu-225 (proton donor) is an active-site residue. Residue Asn-238 is glycosylated (N-linked (GlcNAc...) asparagine). Residues 270 to 280, His-296, and Arg-303 each bind heparan sulfate group; that span reads QPRRKTAKMLK. Positions 288-417 are required for heterodimerization with the heparanase 8 kDa subunit; the sequence is EVIDSVTWHH…LLFKKLVGTK (130 aa). Catalysis depends on Glu-343, which acts as the Nucleophile. Residues 348–350 and 389–391 contribute to the heparan sulfate group site; these read YGG and GNY. A disulfide bridge links Cys-437 with Cys-542. Asn-459 carries an N-linked (GlcNAc...) asparagine glycan. Residues 527–543 form a required for transferring proheparanase to the Golgi apparatus, secretion and subsequent enzyme activity and for enhancement of PKB/AKT1 phosphorylation region; the sequence is FSYSFFVIRNAKVAACI.

This sequence belongs to the glycosyl hydrolase 79 family. Heterodimer; heterodimer formation between the 8 kDa and the 50 kDa subunits is required for enzyme activity. Interacts with TF; the interaction, inhibited by heparin, enhances the generation of activated factor X and activates coagulation. Interacts with HRG; the interaction is enhanced at acidic pH, partially inhibits binding of HPSE to cell surface receptors and modulates its enzymatic activity. Interacts with SDC1; the interaction enhances the shedding of SDC1. Interacts with HPSE2. Post-translationally, proteolytically processed. The cleavage of the 65 kDa form leads to the generation of a linker peptide, and 8 kDa and 50 kDa products. The active form, the 8/50 kDa heterodimer, is resistant to degradation. Complete removal of the linker peptide appears to be a prerequisite to the complete activation of the enzyme. N-glycosylated. Glycosylation of the 50 kDa subunit appears to be essential for its solubility. As to expression, highly expressed in placenta and spleen and weakly expressed in lymph node, thymus, peripheral blood leukocytes, bone marrow, endothelial cells, fetal liver and tumor tissues. Also expressed in hair follicles, specifically in both Henle's and Huxley's layers of inner the root sheath (IRS) at anagen phase.

The protein resides in the lysosome membrane. The protein localises to the secreted. It is found in the nucleus. It carries out the reaction endohydrolysis of (1-&gt;4)-beta-D-glycosidic bonds of heparan sulfate chains in heparan sulfate proteoglycan.. With respect to regulation, inhibited by EDTA, laminarin sulfate and, to a lower extent, by heparin and sulfamin and activated by calcium and magnesium. In terms of biological role, endoglycosidase that cleaves heparan sulfate proteoglycans (HSPGs) into heparan sulfate side chains and core proteoglycans. Participates in extracellular matrix (ECM) degradation and remodeling. Selectively cleaves the linkage between a glucuronic acid unit and an N-sulfo glucosamine unit carrying either a 3-O-sulfo or a 6-O-sulfo group. Can also cleave the linkage between a glucuronic acid unit and an N-sulfo glucosamine unit carrying a 2-O-sulfo group, but not linkages between a glucuronic acid unit and a 2-O-sulfated iduronic acid moiety. It is essentially inactive at neutral pH but becomes active under acidic conditions such as during tumor invasion and in inflammatory processes. Facilitates cell migration associated with metastasis, wound healing and inflammation. Enhances shedding of syndecans, and increases endothelial invasion and angiogenesis in myelomas. Acts as a procoagulant by increasing the generation of activation factor X in the presence of tissue factor and activation factor VII. Increases cell adhesion to the extracellular matrix (ECM), independent of its enzymatic activity. Induces AKT1/PKB phosphorylation via lipid rafts increasing cell mobility and invasion. Heparin increases this AKT1/PKB activation. Regulates osteogenesis. Enhances angiogenesis through up-regulation of SRC-mediated activation of VEGF. Implicated in hair follicle inner root sheath differentiation and hair homeostasis. This chain is Heparanase (HPSE), found in Homo sapiens (Human).